We begin with the raw amino-acid sequence, 316 residues long: Low affinity immunoglobulin gamma Fc region receptor II-a (316 aa).

The signal sequence occupies residues 1–35 (MAMETQMSQNVCPRNLWLLQPLTVLLLLASADSQA). The Extracellular portion of the chain corresponds to 36-216 (APPKAVLKLE…PSVGSSSPVG (181 aa)). Ig-like C2-type domains follow at residues 38-117 (PKAV…VHLT) and 121-203 (EWLV…VTIT). 2 disulfide bridges follow: Cys61–Cys103 and Cys142–Cys186. Asn96, Asn170, and Asn177 each carry an N-linked (GlcNAc...) asparagine glycan. A helical transmembrane segment spans residues 217 to 239 (IIVAVVIATAVAAIVAAVVALIY). The Cytoplasmic portion of the chain corresponds to 240–316 (CRKKRISANS…PPNDHVNSNN (77 aa)). 2 positions are modified to phosphotyrosine; by SRC-type Tyr-kinases: Tyr287 and Tyr303.

In terms of assembly, interacts with INPP5D/SHIP1 and INPPL1/SHIP2, regulating its function. Interacts with APCS and FGR. Interacts with HCK. Phosphorylated by SRC-type Tyr-kinases such as HCK, LYN, BLK, FYN and SYK.

Its subcellular location is the cell membrane. In terms of biological role, binds to the Fc region of immunoglobulins gamma. Low affinity receptor. By binding to IgG it initiates cellular responses against pathogens and soluble antigens. Promotes phagocytosis of opsonized antigens. The sequence is that of Low affinity immunoglobulin gamma Fc region receptor II-a (FCGR2A) from Pan troglodytes (Chimpanzee).